An 85-amino-acid polypeptide reads, in one-letter code: UPF0512 protein U (85 aa).

It belongs to the UPF0512 family.

The polypeptide is UPF0512 protein U (Dictyostelium discoideum (Social amoeba)).